The following is a 418-amino-acid chain: Histidine--tRNA ligase (418 aa).

Belongs to the class-II aminoacyl-tRNA synthetase family. In terms of assembly, homodimer.

Its subcellular location is the cytoplasm. It catalyses the reaction tRNA(His) + L-histidine + ATP = L-histidyl-tRNA(His) + AMP + diphosphate + H(+). The protein is Histidine--tRNA ligase of Thermoanaerobacter pseudethanolicus (strain ATCC 33223 / 39E) (Clostridium thermohydrosulfuricum).